Reading from the N-terminus, the 331-residue chain is MVSRNSDGYFLDPTGMTVPGLGPSFTAAVSSSSSPTTSSTAVAVADVTAMVSSSEEDLSKKIRKPYTITKSRESWTEPEHDKFLEALQLFDRDWKKIEAFIGSKTVIQIRSHAQKYFLKVQKSGTGEHLPPPRPKRKAAHPYPQKAHKNVQLQVPGSFKSTSEPNDPSFMFRPESSSMLMTSPTTAAAAPWTNNAQTISFTPLPKAGAGANNNCSSSSENTPRPRSNRDARDHGNVGHSLRVLPDFAQVYGFIGSVFDPYASNHLQKLKKMDPIDVETVLLLMRNLSINLSSPDFEDHRRLLSSYDIGSETATDHGGVNKTLNKDPPEIST.

An HTH myb-type domain is found at 67–121; it reads TITKSRESWTEPEHDKFLEALQLFDRDWKKIEAFIGSKTVIQIRSHAQKYFLKVQ. A DNA-binding region (H-T-H motif) is located at residues 94–117; the sequence is WKKIEAFIGSKTVIQIRSHAQKYF. Disordered stretches follow at residues 122 to 166, 203 to 237, and 309 to 331; these read KSGT…EPND, LPKAGAGANNNCSSSSENTPRPRSNRDARDHGNVG, and SETATDHGGVNKTLNKDPPEIST. Positions 150 to 165 are enriched in polar residues; it reads VQLQVPGSFKSTSEPN. Positions 211-220 are enriched in low complexity; that stretch reads NNNCSSSSEN. 2 stretches are compositionally biased toward basic and acidic residues: residues 226-235 and 322-331; these read SNRDARDHGN and LNKDPPEIST.

The protein resides in the nucleus. Functionally, probable transcription factor. RVE4, RVE6 and RVE8 are components of the circadian system acting synergistically to regulate flowering time, redundantly to regulate leaf growth, and antagonistically to regulate hypocotyl elongation; their action seems independent of ZTL and HY5. The chain is Protein REVEILLE 6 from Arabidopsis thaliana (Mouse-ear cress).